The following is a 226-amino-acid chain: Probable endonuclease LCL3 (226 aa).

Residues 15–32 traverse the membrane as a helical segment; the sequence is VFYTSILTGGILSSFYVY. The TNase-like domain occupies 53–212; that stretch reads RTLFGRVTSV…RKKKIGMFQQ (160 aa). Arg103 is a catalytic residue. Residue Asp108 coordinates Ca(2+). Active-site residues include Glu111 and Arg151.

This sequence belongs to the LCL3 family.

Its subcellular location is the mitochondrion. The protein resides in the membrane. This chain is Probable endonuclease LCL3 (LCL3), found in Yarrowia lipolytica (strain CLIB 122 / E 150) (Yeast).